The following is a 1163-amino-acid chain: Ankyrin repeat-containing protein F37A4.4 (1163 aa).

An ANK repeat occupies 856–885 (YGNTALHVATRRGYQNLVEILIKHGADRSF). Residues 929-1025 (LCVPEKFPVS…KLIEKDCDYL (97 aa)) form the BRCT domain.

The polypeptide is Ankyrin repeat-containing protein F37A4.4 (Caenorhabditis elegans).